Reading from the N-terminus, the 443-residue chain is Cysteine proteinase B (443 aa).

The first 27 residues, 1-27 (MATSRAALCAVAVVCVVLAAACAPARA), serve as a signal peptide directing secretion. The propeptide at 28–125 (IHVGTPAAAL…YRKARADLSA (98 aa)) is activation peptide. 2 cysteine pairs are disulfide-bonded: cysteine 147–cysteine 188 and cysteine 181–cysteine 226. Cysteine 150 is a catalytic residue. Asparagine 228 carries N-linked (GlcNAc...) asparagine glycosylation. Cysteine 281 and cysteine 329 are oxidised to a cystine. Residues histidine 288 and asparagine 308 contribute to the active site.

The protein belongs to the peptidase C1 family.

In Leishmania mexicana, this protein is Cysteine proteinase B (LMCPB).